The primary structure comprises 123 residues: Small ribosomal subunit protein uS12 (123 aa).

Residue Asp89 is modified to 3-methylthioaspartic acid. Residues Thr104 to Lys123 form a disordered region. A compositionally biased stretch (basic residues) spans Arg110 to Lys123.

This sequence belongs to the universal ribosomal protein uS12 family. As to quaternary structure, part of the 30S ribosomal subunit. Contacts proteins S8 and S17. May interact with IF1 in the 30S initiation complex.

With S4 and S5 plays an important role in translational accuracy. In terms of biological role, interacts with and stabilizes bases of the 16S rRNA that are involved in tRNA selection in the A site and with the mRNA backbone. Located at the interface of the 30S and 50S subunits, it traverses the body of the 30S subunit contacting proteins on the other side and probably holding the rRNA structure together. The combined cluster of proteins S8, S12 and S17 appears to hold together the shoulder and platform of the 30S subunit. This is Small ribosomal subunit protein uS12 from Parvibaculum lavamentivorans (strain DS-1 / DSM 13023 / NCIMB 13966).